The chain runs to 1438 residues: Pyochelin synthetase PchE (1438 aa).

A Carrier 1 domain is found at 6-85 (DSRTALRDWL…AWLDLLACAD (80 aa)). An O-(pantetheine 4'-phosphoryl)serine modification is found at serine 46. A condensation/cyclization region spans residues 136-442 (RTRDVDPQRL…ARRQGQPRSA (307 aa)). The adenylation stretch occupies residues 563 to 950 (RAAEAPDADA…GRVDQQVKVR (388 aa)). The Carrier 2 domain occupies 1350 to 1425 (EPLEAHEQAL…GLARHLQAQT (76 aa)). O-(pantetheine 4'-phosphoryl)serine is present on serine 1385.

Belongs to the NRP synthetase family. It depends on pantetheine 4'-phosphate as a cofactor.

It catalyses the reaction holo-[peptidyl-carrier protein] + L-cysteine + ATP = L-cysteinyl-[peptidyl-carrier protein] + AMP + diphosphate. It participates in siderophore biosynthesis. The protein operates within antifungal biosynthesis. In terms of biological role, involved in the biosynthesis of the siderophore pyochelin. Accepts salicylate activated by PchD at the first peptidyl carrier domain (ArCP), and activates and fixes one molecule of cysteine at the second peptidyl carrier domain (PCP1) via a thioester linkage to the phosphopanthetheine moiety. Then catalyzes the condensation reaction between the salicylate bound to the first site and the cysteine bound to the second site, and the cyclization of the cysteine to form the salicyl-thiazolinyl-S-PCP1 intermediate at the second site. When this intermediate is released by the action of a thioesterase, it produces the antifungal antibiotic dihydroaeruginoic acid (Dha or hydroxyphenyl-thiazolinyl-carboxylate). This chain is Pyochelin synthetase PchE, found in Pseudomonas aeruginosa (strain UCBPP-PA14).